A 340-amino-acid chain; its full sequence is Beta-hexosaminidase (340 aa).

Substrate is bound by residues Asp-60, Arg-68, Arg-127, and Lys-157–His-158. The Proton donor/acceptor role is filled by His-170. Asp-242 (nucleophile) is an active-site residue.

Belongs to the glycosyl hydrolase 3 family. NagZ subfamily.

The protein resides in the cytoplasm. The enzyme catalyses Hydrolysis of terminal non-reducing N-acetyl-D-hexosamine residues in N-acetyl-beta-D-hexosaminides.. Its pathway is cell wall biogenesis; peptidoglycan recycling. Functionally, plays a role in peptidoglycan recycling by cleaving the terminal beta-1,4-linked N-acetylglucosamine (GlcNAc) from peptide-linked peptidoglycan fragments, giving rise to free GlcNAc, anhydro-N-acetylmuramic acid and anhydro-N-acetylmuramic acid-linked peptides. This is Beta-hexosaminidase from Glaesserella parasuis serovar 5 (strain SH0165) (Haemophilus parasuis).